A 498-amino-acid polypeptide reads, in one-letter code: Cytochrome P450 71B31 (498 aa).

The chain crosses the membrane as a helical span at residues 3–23 (MFLGLLFLFPLFFILFKNLLP). C441 serves as a coordination point for heme.

This sequence belongs to the cytochrome P450 family. The cofactor is heme.

Its subcellular location is the membrane. The sequence is that of Cytochrome P450 71B31 (CYP71B31) from Arabidopsis thaliana (Mouse-ear cress).